The primary structure comprises 320 residues: Small ribosomal subunit protein uS15m (320 aa).

Disordered regions lie at residues 37 to 60 and 214 to 242; these read NISQ…AQQR and QSLE…DTGS.

Belongs to the universal ribosomal protein uS15 family. As to quaternary structure, component of the mitochondrial small ribosomal subunit (mt-SSU). Mature N.crassa 74S mitochondrial ribosomes consist of a small (37S) and a large (54S) subunit. The 37S small subunit contains a 16S ribosomal RNA (16S mt-rRNA) and 32 different proteins. The 54S large subunit contains a 23S rRNA (23S mt-rRNA) and 42 different proteins.

It localises to the mitochondrion. Functionally, component of the mitochondrial ribosome (mitoribosome), a dedicated translation machinery responsible for the synthesis of mitochondrial genome-encoded proteins, including at least some of the essential transmembrane subunits of the mitochondrial respiratory chain. The mitoribosomes are attached to the mitochondrial inner membrane and translation products are cotranslationally integrated into the membrane. In Neurospora crassa (strain ATCC 24698 / 74-OR23-1A / CBS 708.71 / DSM 1257 / FGSC 987), this protein is Small ribosomal subunit protein uS15m (mrps28).